The chain runs to 106 residues: Transcription and mRNA export factor SUS1 (106 aa).

It belongs to the ENY2 family. Component of the nuclear pore complex (NPC)-associated TREX-2 complex (transcription and export complex 2), composed of at least SUS1, SAC3, THP1, SEM1, and CDC31. TREX-2 contains 2 SUS1 chains. The TREX-2 complex interacts with the nucleoporin NUP1. Component of the 1.8 MDa SAGA transcription coactivator-HAT complex. SAGA is built of 5 distinct domains with specialized functions. Within the SAGA complex, SUS1, SGF11, SGF73 and UBP8 form an additional subcomplex of SAGA called the DUB module (deubiquitination module). Interacts directly with THP1, SAC3, SGF11, and with the RNA polymerase II.

Its subcellular location is the nucleus. The protein localises to the nucleoplasm. It is found in the cytoplasm. The protein resides in the P-body. Its function is as follows. Involved in mRNA export coupled transcription activation by association with both the TREX-2 and the SAGA complexes. At the promoters, SAGA is required for recruitment of the basal transcription machinery. It influences RNA polymerase II transcriptional activity through different activities such as TBP interaction and promoter selectivity, interaction with transcription activators, and chromatin modification through histone acetylation and deubiquitination. Within the SAGA complex, participates in a subcomplex required for deubiquitination of H2B and for the maintenance of steady-state H3 methylation levels. The TREX-2 complex functions in docking export-competent ribonucleoprotein particles (mRNPs) to the nuclear entrance of the nuclear pore complex (nuclear basket). TREX-2 participates in mRNA export and accurate chromatin positioning in the nucleus by tethering genes to the nuclear periphery. May also be involved in cytoplasmic mRNA decay by interaction with components of P-bodies. The sequence is that of Transcription and mRNA export factor SUS1 from Mycosarcoma maydis (Corn smut fungus).